Reading from the N-terminus, the 357-residue chain is Decorin (357 aa).

A signal peptide spans 1 to 16 (MRLVLLFVLLLPVCLA). Positions 17–30 (TRFHQKGLFDFMIE) are excised as a propeptide. S46 carries O-linked (Xyl...) (glycosaminoglycan) serine glycosylation. 2 disulfides stabilise this stretch: C52-C58 and C56-C65. LRR repeat units lie at residues 71–91 (ERVP…NNKI), 92–115 (TEIK…NNKI), 116–139 (SKIS…KNNL), 140–160 (KELP…ENEI), 161–184 (SKLR…TNPL), 185–210 (KSSG…DTNI), 211–231 (TSIP…GNKI), 232–255 (SKID…FNSI), 256–279 (SSVE…NNEL), 280–302 (VRVP…NNKI), 303–332 (ASIG…SNPV), and 333–357 (QYWE…GNYK). N209 is a glycosylation site (N-linked (GlcNAc...) asparagine). Residue N260 is glycosylated (N-linked (GlcNAc...) asparagine). A disulfide bridge connects residues C311 and C344.

It belongs to the small leucine-rich proteoglycan (SLRP) family. SLRP class I subfamily. As to quaternary structure, binds to type I and type II collagen, to fibronectin and TGF-beta. Forms a ternary complex with MFAP2 and ELN. The attached glycosaminoglycan chain can be either chondroitin sulfate or dermatan sulfate depending upon the tissue of origin.

The protein localises to the secreted. It localises to the extracellular space. The protein resides in the extracellular matrix. May affect the rate of fibrils formation. The chain is Decorin (DCN) from Gallus gallus (Chicken).